A 164-amino-acid polypeptide reads, in one-letter code: T-cell surface glycoprotein CD3 zeta chain (164 aa).

The N-terminal stretch at 1-21 (MKWKVSVLACILHVRFPGAEA) is a signal peptide. At Q22 the chain carries Blocked amino end (Gln). Residues 22 to 30 (QSFGLLDPK) lie on the Extracellular side of the membrane. Residues 31–51 (LCYLLDGILFIYGVIITALYL) traverse the membrane as a helical segment. The Cytoplasmic portion of the chain corresponds to 52-164 (RAKFSRSAET…ALHMQTLAPR (113 aa)). S58 bears the Phosphoserine mark. ITAM domains lie at 61–89 (TAANLQDPNQLYNELNLGRREEYDVLEKK), 100–128 (QQRRRNPQEGVYNALQKDKMAEAYSEIGT), and 131–159 (ERRRGKGHDGLYQGLSTATKDTYDALHMQ). Residues Y72 and Y83 each carry the phosphotyrosine modification. The span at 87–96 (EKKRARDPEM) shows a compositional bias: basic and acidic residues. Positions 87–111 (EKKRARDPEMGGKQQRRRNPQEGVY) are disordered. Residues Y111, Y123, Y142, and Y153 each carry the phosphotyrosine modification. Positions 124–143 (SEIGTKGERRRGKGHDGLYQ) are disordered.

The protein belongs to the CD3Z/FCER1G family. In terms of assembly, the TCR-CD3 complex is composed of a CD3D/CD3E and a CD3G/CD3E heterodimers that preferentially associate with TCRalpha and TCRbeta, respectively, to form TCRalpha/CD3E/CD3G and TCRbeta/CD3G/CD3E trimers. In turn, the hexamer interacts with CD3Z homodimer to form the TCR-CD3 complex. Alternatively, TCRalpha and TCRbeta can be replaced by TCRgamma and TCRdelta. Interacts with SLA. Interacts with SLA2. Interacts with TRAT1. Interacts with DOCK2. Interacts with SHB. Interacts with ZAP70. Interacts (tyrosine phosphorylated) with SHC1 (via SH2 domain). Interacts with PTPRC. Interacts with CRK; this interaction regulates CD3Z phosphorylation. Interacts (on T cell side) with CD81, ICAM1 and CD9 at immunological synapses between antigen-presenting cells and T cells. Interacts with CD160. Interacts with LY6E. Interacts with LY6E. The signaling subunit of immunoglobulin gamma (IgG) Fc receptor complex. As a homodimer or a heterodimer with FCER1G, associates with the ligand binding subunit FCGR3A (via transmembrane domain); this interaction is a prerequisite for Fc receptor complex expression on the cell surface. Interacts with CD5. Phosphorylated on Tyr residues after T-cell receptor triggering by LCK in association with CD4/CD8. In terms of tissue distribution, CD3Z is expressed in normal lymphoid tissue and in peripheral blood mononuclear cells (PBMCs). Expressed also in retinal ganglion cells.

Its subcellular location is the cell membrane. Functionally, part of the TCR-CD3 complex present on T-lymphocyte cell surface that plays an essential role in adaptive immune response. When antigen presenting cells (APCs) activate T-cell receptor (TCR), TCR-mediated signals are transmitted across the cell membrane by the CD3 chains CD3D, CD3E, CD3G and CD3Z. All CD3 chains contain immunoreceptor tyrosine-based activation motifs (ITAMs) in their cytoplasmic domain. Upon TCR engagement, these motifs become phosphorylated by Src family protein tyrosine kinases LCK and FYN, resulting in the activation of downstream signaling pathways. CD3Z ITAMs phosphorylation creates multiple docking sites for the protein kinase ZAP70 leading to ZAP70 phosphorylation and its conversion into a catalytically active enzyme. Plays an important role in intrathymic T-cell differentiation. Additionally, participates in the activity-dependent synapse formation of retinal ganglion cells (RGCs) in both the retina and dorsal lateral geniculate nucleus (dLGN). This Mus musculus (Mouse) protein is T-cell surface glycoprotein CD3 zeta chain (Cd247).